Consider the following 176-residue polypeptide: Cytochrome b (176 aa).

The next 3 membrane-spanning stretches (helical) occupy residues F33–M53, W77–I98, and W113–L133. The heme b site is built by H83 and H97.

Belongs to the cytochrome b family. The cytochrome bc1 complex contains 11 subunits: 3 respiratory subunits (MT-CYB, CYC1 and UQCRFS1), 2 core proteins (UQCRC1 and UQCRC2) and 6 low-molecular weight proteins (UQCRH/QCR6, UQCRB/QCR7, UQCRQ/QCR8, UQCR10/QCR9, UQCR11/QCR10 and a cleavage product of UQCRFS1). This cytochrome bc1 complex then forms a dimer. Heme b serves as cofactor.

The protein resides in the mitochondrion inner membrane. Functionally, component of the ubiquinol-cytochrome c reductase complex (complex III or cytochrome b-c1 complex) that is part of the mitochondrial respiratory chain. The b-c1 complex mediates electron transfer from ubiquinol to cytochrome c. Contributes to the generation of a proton gradient across the mitochondrial membrane that is then used for ATP synthesis. The chain is Cytochrome b (MT-CYB) from Promops centralis (Big crested mastiff bat).